The following is a 295-amino-acid chain: NAD kinase (295 aa).

D74 functions as the Proton acceptor in the catalytic mechanism. Residues 74–75, 148–149, H159, R176, D178, and 189–194 each bind NAD(+); these read DG, ND, and TAYALS.

Belongs to the NAD kinase family. It depends on a divalent metal cation as a cofactor.

Its subcellular location is the cytoplasm. It catalyses the reaction NAD(+) + ATP = ADP + NADP(+) + H(+). Functionally, involved in the regulation of the intracellular balance of NAD and NADP, and is a key enzyme in the biosynthesis of NADP. Catalyzes specifically the phosphorylation on 2'-hydroxyl of the adenosine moiety of NAD to yield NADP. The sequence is that of NAD kinase from Legionella pneumophila (strain Corby).